The following is a 186-amino-acid chain: Glycerol-3-phosphate acyltransferase 1 (186 aa).

5 helical membrane-spanning segments follow: residues 9–29, 58–78, 85–105, 121–141, and 161–181; these read MQFL…AYIV, GYFV…VSIA, STFV…PVLF, IAFD…FYLI, and ILYS…VLIL.

Belongs to the PlsY family. In terms of assembly, probably interacts with PlsX.

It is found in the cell membrane. The enzyme catalyses an acyl phosphate + sn-glycerol 3-phosphate = a 1-acyl-sn-glycero-3-phosphate + phosphate. It participates in lipid metabolism; phospholipid metabolism. Catalyzes the transfer of an acyl group from acyl-phosphate (acyl-PO(4)) to glycerol-3-phosphate (G3P) to form lysophosphatidic acid (LPA). This enzyme utilizes acyl-phosphate as fatty acyl donor, but not acyl-CoA or acyl-ACP. This chain is Glycerol-3-phosphate acyltransferase 1, found in Bacillus cereus (strain ZK / E33L).